The following is a 374-amino-acid chain: Putative clathrin assembly protein At1g33340 (374 aa).

An ENTH domain is found at 30 to 163 (YNEKAFFDIE…GWIINQAGKL (134 aa)).

It is found in the membrane. It localises to the clathrin-coated pit. The protein resides in the golgi apparatus. The protein localises to the cytoplasmic vesicle. Its subcellular location is the clathrin-coated vesicle. This chain is Putative clathrin assembly protein At1g33340, found in Arabidopsis thaliana (Mouse-ear cress).